We begin with the raw amino-acid sequence, 532 residues long: MAFAISKRNATLFLVTLLLISVPLSSSTLQQDFVKCLVDNSDVSFPITASFFSPDQNATLFKEELESTAQNLRYLTPSNPKPVFIFEPLYETHVQAAVVCAKKLQLHLRLRSGGHDYEGLSFVAEDETPFVIVDLSKLRQVDVDLDSNSAWAHAGATIGEVYYRIQEKSQTHGFPAGLCSSLGIGGHLVGGAYGSMMRKFGLGADNVLDARIVDANGQILDRAAMGEDVFWAIRGGGGGSFGVILAWKIKLVPVPATVTVFTVTKTLEQDGTKVLYKWEQIADKLDDDLFIRVIISPASKTTKPGNRTISMSYQAQFLGDSNRLLQVMQKSFPELGLTKKDCTEMSWIKSVMYIAGFPNSAAPEALLAGKSLFKNHFKAKSDFVKEPIPVEGLEGLWERFLEEDSPLTIWNPYGGMMSRISESEIPFPHRNGTLFKIQWLSTWQDGKVSEERHMKWIREMYSYMEQYVSKNPRQAYVNYRDLDLGTNEGETDAREWGAKYYKGNFERLVKIKGEFDPDNFFRHEQSVPTKIG.

The signal sequence occupies residues 1-27 (MAFAISKRNATLFLVTLLLISVPLSSS). The cysteines at positions 36 and 100 are disulfide-linked. An N-linked (GlcNAc...) asparagine glycan is attached at Asn57. The 179-residue stretch at 76-254 (TPSNPKPVFI…LAWKIKLVPV (179 aa)) folds into the FAD-binding PCMH-type domain. The segment at residues 115 to 179 (HDYEGLSFVA…QTHGFPAGLC (65 aa)) is a cross-link (6-(S-cysteinyl)-8alpha-(pros-histidyl)-FAD (His-Cys)). Residues Asn306 and Asn431 are each glycosylated (N-linked (GlcNAc...) asparagine).

This sequence belongs to the oxygen-dependent FAD-linked oxidoreductase family. The cofactor is FAD. Post-translationally, the FAD cofactor is bound via a bicovalent 6-S-cysteinyl, 8alpha-N1-histidyl FAD linkage. Expressed in sepals and stamen.

It localises to the secreted. The protein localises to the cell wall. It catalyses the reaction (E)-4-coumaroyl alcohol + A = (E)-4-coumaraldehyde + AH2. It carries out the reaction (E)-coniferol + A = (E)-coniferaldehyde + AH2. The enzyme catalyses (E)-sinapyl alcohol + A = (E)-sinapaldehyde + AH2. The catalysed reaction is 4-O-(beta-D-glucosyl)-(E)-coniferol + A = 4-O-(beta-D-glucosyl)-4-(E)-coniferyl aldehyde + AH2. Required for endosperm development and polar nuclei fusion. Mediates oxidation of p-hydroxylated derivatives of cinnamyl alcohol (i.e. the monolignols p-coumaryl-, coniferyl-, and sinapyl alcohol) to their corresponding aldehydes. Can also use the beta-O-glycosylated form of coniferyl alcohol (coniferin) as substrate, but is much less efficient towards cinnamyl alcohol. The electron acceptor required for these reactions is not known, but does not seem to be dioxygen. The polypeptide is Monolignol oxidoreductase AtBBE-like 15 (Arabidopsis thaliana (Mouse-ear cress)).